The primary structure comprises 198 residues: Threonylcarbamoyl-AMP synthase (198 aa).

Residues 15-198 (LLKIYHIIKL…AISGQLIRRG (184 aa)) enclose the YrdC-like domain.

This sequence belongs to the SUA5 family. TsaC subfamily.

The protein resides in the cytoplasm. The catalysed reaction is L-threonine + hydrogencarbonate + ATP = L-threonylcarbamoyladenylate + diphosphate + H2O. Its function is as follows. Required for the formation of a threonylcarbamoyl group on adenosine at position 37 (t(6)A37) in tRNAs that read codons beginning with adenine. Catalyzes the conversion of L-threonine, HCO(3)(-)/CO(2) and ATP to give threonylcarbamoyl-AMP (TC-AMP) as the acyladenylate intermediate, with the release of diphosphate. The sequence is that of Threonylcarbamoyl-AMP synthase from Baumannia cicadellinicola subsp. Homalodisca coagulata.